A 331-amino-acid chain; its full sequence is DNA-directed RNA polymerase subunit alpha (331 aa).

Residues M1–R235 form an alpha N-terminal domain (alpha-NTD) region. The segment at Q255–F331 is alpha C-terminal domain (alpha-CTD).

The protein belongs to the RNA polymerase alpha chain family. In terms of assembly, homodimer. The RNAP catalytic core consists of 2 alpha, 1 beta, 1 beta' and 1 omega subunit. When a sigma factor is associated with the core the holoenzyme is formed, which can initiate transcription.

The enzyme catalyses RNA(n) + a ribonucleoside 5'-triphosphate = RNA(n+1) + diphosphate. DNA-dependent RNA polymerase catalyzes the transcription of DNA into RNA using the four ribonucleoside triphosphates as substrates. This chain is DNA-directed RNA polymerase subunit alpha, found in Rhodopirellula baltica (strain DSM 10527 / NCIMB 13988 / SH1).